We begin with the raw amino-acid sequence, 286 residues long: 33 kDa chaperonin (286 aa).

2 cysteine pairs are disulfide-bonded: cysteine 225–cysteine 227 and cysteine 258–cysteine 261.

It belongs to the HSP33 family. In terms of processing, under oxidizing conditions two disulfide bonds are formed involving the reactive cysteines. Under reducing conditions zinc is bound to the reactive cysteines and the protein is inactive.

Its subcellular location is the cytoplasm. Functionally, redox regulated molecular chaperone. Protects both thermally unfolding and oxidatively damaged proteins from irreversible aggregation. Plays an important role in the bacterial defense system toward oxidative stress. This chain is 33 kDa chaperonin, found in Shewanella baltica (strain OS223).